The following is a 352-amino-acid chain: tRNA uridine(34) hydroxylase (352 aa).

A Rhodanese domain is found at 144 to 238 (SDPDVILIDT…YLEEVPASDS (95 aa)). C198 (cysteine persulfide intermediate) is an active-site residue.

The protein belongs to the TrhO family.

It catalyses the reaction uridine(34) in tRNA + AH2 + O2 = 5-hydroxyuridine(34) in tRNA + A + H2O. In terms of biological role, catalyzes oxygen-dependent 5-hydroxyuridine (ho5U) modification at position 34 in tRNAs. The polypeptide is tRNA uridine(34) hydroxylase (Psychrobacter arcticus (strain DSM 17307 / VKM B-2377 / 273-4)).